The primary structure comprises 114 residues: Small ribosomal subunit protein bS6 (114 aa).

This sequence belongs to the bacterial ribosomal protein bS6 family.

Binds together with bS18 to 16S ribosomal RNA. This is Small ribosomal subunit protein bS6 from Thermosynechococcus vestitus (strain NIES-2133 / IAM M-273 / BP-1).